Here is a 310-residue protein sequence, read N- to C-terminus: Thioredoxin reductase (310 aa).

34–41 (NGMQPGGQ) serves as a coordination point for FAD. Residues Cys-135 and Cys-138 are joined by a disulfide bond. 281–290 (DVQDKIYRQA) is an FAD binding site.

Belongs to the class-II pyridine nucleotide-disulfide oxidoreductase family. Homodimer. FAD is required as a cofactor.

The protein resides in the cytoplasm. The enzyme catalyses [thioredoxin]-dithiol + NADP(+) = [thioredoxin]-disulfide + NADPH + H(+). The sequence is that of Thioredoxin reductase (trxB) from Rickettsia conorii (strain ATCC VR-613 / Malish 7).